Reading from the N-terminus, the 180-residue chain is Adenine phosphoribosyltransferase (180 aa).

Ala2 is modified (N-acetylalanine). Phosphoserine is present on residues Ser4, Ser15, and Ser30. Residue Tyr60 is modified to Phosphotyrosine. Residue Ser66 is modified to Phosphoserine. Position 114 is an N6-acetyllysine (Lys114). Residue Thr135 is modified to Phosphothreonine.

The protein belongs to the purine/pyrimidine phosphoribosyltransferase family. As to quaternary structure, homodimer.

It is found in the cytoplasm. The catalysed reaction is AMP + diphosphate = 5-phospho-alpha-D-ribose 1-diphosphate + adenine. The protein operates within purine metabolism; AMP biosynthesis via salvage pathway; AMP from adenine: step 1/1. Its function is as follows. Catalyzes a salvage reaction resulting in the formation of AMP, that is energically less costly than de novo synthesis. In Cricetulus griseus (Chinese hamster), this protein is Adenine phosphoribosyltransferase.